Here is a 132-residue protein sequence, read N- to C-terminus: Large-conductance mechanosensitive channel (132 aa).

3 consecutive transmembrane segments (helical) span residues 14 to 34 (VVDLAVGVVIGAAFGKIVSSL), 38 to 58 (IITPLLGMVLGGVDFTSLHFG), and 67 to 87 (GNFIQTIFDFLIIAASIFMFV).

The protein belongs to the MscL family. Homopentamer.

The protein localises to the cell membrane. Channel that opens in response to stretch forces in the membrane lipid bilayer. May participate in the regulation of osmotic pressure changes within the cell. In Bacillus cereus (strain B4264), this protein is Large-conductance mechanosensitive channel.